A 268-amino-acid polypeptide reads, in one-letter code: Putative ABC transporter ATP-binding protein LMOf2365_1216 (268 aa).

An ABC transporter domain is found at 2 to 237 (LKTEHISFQY…KSNVEQAGLV (236 aa)). An ATP-binding site is contributed by 35–42 (GANGSGKS).

This sequence belongs to the ABC transporter superfamily.

It localises to the cell membrane. Functionally, probably part of an ABC transporter complex. Responsible for energy coupling to the transport system. The protein is Putative ABC transporter ATP-binding protein LMOf2365_1216 of Listeria monocytogenes serotype 4b (strain F2365).